Here is a 316-residue protein sequence, read N- to C-terminus: tRNA dimethylallyltransferase (316 aa).

Gly-17–Thr-24 contacts ATP. Residue Thr-19–Thr-24 coordinates substrate. 3 interaction with substrate tRNA regions span residues Asp-42 to Leu-45, Gln-166 to Arg-170, and Arg-247 to Arg-252.

It belongs to the IPP transferase family. In terms of assembly, monomer. Requires Mg(2+) as cofactor.

It catalyses the reaction adenosine(37) in tRNA + dimethylallyl diphosphate = N(6)-dimethylallyladenosine(37) in tRNA + diphosphate. Catalyzes the transfer of a dimethylallyl group onto the adenine at position 37 in tRNAs that read codons beginning with uridine, leading to the formation of N6-(dimethylallyl)adenosine (i(6)A). In Salmonella arizonae (strain ATCC BAA-731 / CDC346-86 / RSK2980), this protein is tRNA dimethylallyltransferase.